We begin with the raw amino-acid sequence, 215 residues long: Urease accessory protein UreE (215 aa).

A disordered region spans residues 134–215 (FDPEGGAYAP…HGHSHKHDHK (82 aa)). Basic and acidic residues predominate over residues 164 to 206 (GHHDHADHEHDHKHDHGKHDHAGHDHAHDHHVHDEHCGHDHGH).

Belongs to the UreE family.

The protein localises to the cytoplasm. Its function is as follows. Involved in urease metallocenter assembly. Binds nickel. Probably functions as a nickel donor during metallocenter assembly. The protein is Urease accessory protein UreE of Rhodopseudomonas palustris (strain HaA2).